We begin with the raw amino-acid sequence, 219 residues long: Large ribosomal subunit protein bL25 (219 aa).

The disordered stretch occupies residues 176–219 (VTVVPPTDEPSEEEVEAMEGESATEEPEVVGEDKEDDEEENKED). Acidic residues predominate over residues 184–219 (EPSEEEVEAMEGESATEEPEVVGEDKEDDEEENKED).

This sequence belongs to the bacterial ribosomal protein bL25 family. CTC subfamily. As to quaternary structure, part of the 50S ribosomal subunit; part of the 5S rRNA/L5/L18/L25 subcomplex. Contacts the 5S rRNA. Binds to the 5S rRNA independently of L5 and L18.

In terms of biological role, this is one of the proteins that binds to the 5S RNA in the ribosome where it forms part of the central protuberance. This is Large ribosomal subunit protein bL25 from Staphylococcus epidermidis (strain ATCC 35984 / DSM 28319 / BCRC 17069 / CCUG 31568 / BM 3577 / RP62A).